The sequence spans 133 residues: MEQSLHLEIISPDHTIVSDRVTYVNLPGVNGELGILPGHIPLMAALDIGKLHYQQDSKNYYVFISAGFAEVSNNKVTVLTEAAEKASEIDVARAQAAKERAKARLLKAEEDIDMARAEAAMHRAIIRLNISSL.

The protein belongs to the ATPase epsilon chain family. F-type ATPases have 2 components, CF(1) - the catalytic core - and CF(0) - the membrane proton channel. CF(1) has five subunits: alpha(3), beta(3), gamma(1), delta(1), epsilon(1). CF(0) has three main subunits: a, b and c.

It localises to the cell membrane. Functionally, produces ATP from ADP in the presence of a proton gradient across the membrane. The polypeptide is ATP synthase epsilon chain (Lawsonia intracellularis (strain PHE/MN1-00)).